The sequence spans 536 residues: Chaperonin GroEL (536 aa).

ATP is bound by residues 29–32 (TLGP), 86–90 (DGTTT), G413, 476–478 (DAA), and D492.

The protein belongs to the chaperonin (HSP60) family. As to quaternary structure, forms a cylinder of 14 subunits composed of two heptameric rings stacked back-to-back. Interacts with the co-chaperonin GroES.

The protein resides in the cytoplasm. The enzyme catalyses ATP + H2O + a folded polypeptide = ADP + phosphate + an unfolded polypeptide.. Its function is as follows. Together with its co-chaperonin GroES, plays an essential role in assisting protein folding. The GroEL-GroES system forms a nano-cage that allows encapsulation of the non-native substrate proteins and provides a physical environment optimized to promote and accelerate protein folding. The protein is Chaperonin GroEL of Methanococcus vannielii (strain ATCC 35089 / DSM 1224 / JCM 13029 / OCM 148 / SB).